Consider the following 736-residue polypeptide: Na(+)/H(+) antiporter NhaA (736 aa).

The tract at residues 1 to 387 (MNHSPQSARP…ICGYLLLRAA (387 aa)) is na(+)/H(+) antiporter NhaA. Transmembrane regions (helical) follow at residues 23–43 (AGGI…NSPF), 58–78 (LSLA…LVGL), 96–116 (MLPG…FAVL), 126–146 (GWAV…SLLG), 155–175 (VFLA…IAIF), 178–198 (AEIS…LFVM), 201–221 (MDVV…FFVF), 265–285 (VAFI…FKGL), 298–318 (ILLG…WLAI), 334–354 (LYGV…IGLL), and 367–387 (IGVL…LRAA). The tract at residues 388 to 736 (RPDQSAANPL…EKAIWARYGL (349 aa)) is peptidase S49.

In the N-terminal section; belongs to the NhaA Na(+)/H(+) (TC 2.A.33) antiporter family. This sequence in the C-terminal section; belongs to the peptidase S49 family.

It is found in the cell inner membrane. The catalysed reaction is Na(+)(in) + 2 H(+)(out) = Na(+)(out) + 2 H(+)(in). Functionally, na(+)/H(+) antiporter that extrudes sodium in exchange for external protons. This is Na(+)/H(+) antiporter NhaA from Brucella melitensis biotype 1 (strain ATCC 23456 / CCUG 17765 / NCTC 10094 / 16M).